The sequence spans 117 residues: Small ribosomal subunit protein bS6 (117 aa).

Residues His96–Arg117 form a disordered region. Basic and acidic residues predominate over residues Gln105–Arg117.

It belongs to the bacterial ribosomal protein bS6 family.

Binds together with bS18 to 16S ribosomal RNA. This is Small ribosomal subunit protein bS6 from Ruegeria sp. (strain TM1040) (Silicibacter sp.).